The following is a 362-amino-acid chain: Histidine protein methyltransferase 1 homolog (362 aa).

The disordered stretch occupies residues 28 to 89; it reads KSQKGKEDKN…ACEKQPSLKP (62 aa). Residues 55 to 73 show a composition bias toward polar residues; the sequence is SLGSAASSEDTDSPPSTAD. Residues Ser-62 and Ser-67 each carry the phosphoserine modification. Position 144 is a tele-methylhistidine (His-144). S-adenosyl-L-methionine contacts are provided by residues 158–162, Gly-185, and 206–208; these read IWECT and QDY. A Nuclear localization signal motif is present at residues 237–243; that stretch reads PAGKRQR. Residues 259–261 and Ser-283 each bind S-adenosyl-L-methionine; that span reads GEW.

The protein belongs to the methyltransferase superfamily. METTL18 family. As to quaternary structure, interacts with GRWD1 and members of the heat shock protein 90 and 70 families; these proteins may possibly be methylation substrates for the enzyme. Post-translationally, monomethylated at His-144 through automethylation. Automethylation at His-144 positively regulates the methyltransferase activity toward RPL3. Probably methylated on other residues.

Its subcellular location is the cytoplasm. The protein localises to the cytosol. It localises to the nucleus. It is found in the nucleolus. The enzyme catalyses L-histidyl-[protein] + S-adenosyl-L-methionine = N(tele)-methyl-L-histidyl-[protein] + S-adenosyl-L-homocysteine + H(+). In terms of biological role, protein-L-histidine N-tele-methyltransferase that specifically monomethylates RPL3, thereby regulating translation elongation. Histidine methylation of RPL3 regulates translation elongation by slowing ribosome traversal on tyrosine codons: slower elongation provides enough time for proper folding of synthesized proteins and prevents cellular aggregation of tyrosine-rich proteins. The sequence is that of Histidine protein methyltransferase 1 homolog from Rattus norvegicus (Rat).